We begin with the raw amino-acid sequence, 250 residues long: 5-oxoprolinase subunit A (250 aa).

Belongs to the LamB/PxpA family. As to quaternary structure, forms a complex composed of PxpA, PxpB and PxpC.

It catalyses the reaction 5-oxo-L-proline + ATP + 2 H2O = L-glutamate + ADP + phosphate + H(+). Catalyzes the cleavage of 5-oxoproline to form L-glutamate coupled to the hydrolysis of ATP to ADP and inorganic phosphate. This Streptomyces coelicolor (strain ATCC BAA-471 / A3(2) / M145) protein is 5-oxoprolinase subunit A.